Reading from the N-terminus, the 201-residue chain is FMN-dependent NADH:quinone oxidoreductase (201 aa).

FMN contacts are provided by residues serine 10, serine 16–serine 18, methionine 96–phenylalanine 99, and serine 140–glycine 143.

The protein belongs to the azoreductase type 1 family. In terms of assembly, homodimer. Requires FMN as cofactor.

It catalyses the reaction 2 a quinone + NADH + H(+) = 2 a 1,4-benzosemiquinone + NAD(+). The enzyme catalyses N,N-dimethyl-1,4-phenylenediamine + anthranilate + 2 NAD(+) = 2-(4-dimethylaminophenyl)diazenylbenzoate + 2 NADH + 2 H(+). Functionally, quinone reductase that provides resistance to thiol-specific stress caused by electrophilic quinones. Also exhibits azoreductase activity. Catalyzes the reductive cleavage of the azo bond in aromatic azo compounds to the corresponding amines. This is FMN-dependent NADH:quinone oxidoreductase from Salmonella arizonae (strain ATCC BAA-731 / CDC346-86 / RSK2980).